Here is a 616-residue protein sequence, read N- to C-terminus: Proline--tRNA ligase (616 aa).

Belongs to the class-II aminoacyl-tRNA synthetase family. ProS type 1 subfamily. Homodimer.

The protein resides in the cytoplasm. It carries out the reaction tRNA(Pro) + L-proline + ATP = L-prolyl-tRNA(Pro) + AMP + diphosphate. In terms of biological role, catalyzes the attachment of proline to tRNA(Pro) in a two-step reaction: proline is first activated by ATP to form Pro-AMP and then transferred to the acceptor end of tRNA(Pro). As ProRS can inadvertently accommodate and process non-cognate amino acids such as alanine and cysteine, to avoid such errors it has two additional distinct editing activities against alanine. One activity is designated as 'pretransfer' editing and involves the tRNA(Pro)-independent hydrolysis of activated Ala-AMP. The other activity is designated 'posttransfer' editing and involves deacylation of mischarged Ala-tRNA(Pro). The misacylated Cys-tRNA(Pro) is not edited by ProRS. This chain is Proline--tRNA ligase, found in Lactococcus lactis subsp. cremoris (strain SK11).